Reading from the N-terminus, the 434-residue chain is Gamma-glutamyl phosphate reductase (434 aa).

Belongs to the gamma-glutamyl phosphate reductase family.

It is found in the cytoplasm. It carries out the reaction L-glutamate 5-semialdehyde + phosphate + NADP(+) = L-glutamyl 5-phosphate + NADPH + H(+). Its pathway is amino-acid biosynthesis; L-proline biosynthesis; L-glutamate 5-semialdehyde from L-glutamate: step 2/2. In terms of biological role, catalyzes the NADPH-dependent reduction of L-glutamate 5-phosphate into L-glutamate 5-semialdehyde and phosphate. The product spontaneously undergoes cyclization to form 1-pyrroline-5-carboxylate. This is Gamma-glutamyl phosphate reductase from Pelotomaculum thermopropionicum (strain DSM 13744 / JCM 10971 / SI).